Reading from the N-terminus, the 470-residue chain is N amino acid transport system protein (470 aa).

Residues 1 to 11 (MDSQYETKKND) are compositionally biased toward basic and acidic residues. Residues 1 to 21 (MDSQYETKKNDPNAIMPYPES) form a disordered region. Over 1-56 (MDSQYETKKNDPNAIMPYPESNDEHVGEVRGLGGGIMDKEPEAQEGHAKFHRLGWK) the chain is Extracellular. 2 consecutive transmembrane segments (helical) span residues 57 to 77 (RLTV…LPGA) and 78 to 98 (FATL…LICI). The Extracellular portion of the chain corresponds to 99–131 (YTAHVIGQTKLKHPEIAHYADVGRVMFGRWGYE). The helical transmembrane segment at 132-152 (IISFMFVLQLIFIVGSHVLTG) threads the bilayer. Over 153–168 (TIMWGTITDNGNGTCS) the chain is Cytoplasmic. Helical transmembrane passes span 169–189 (LVFG…PSFA) and 191–211 (VAIL…ITMI). Topologically, residues 212-236 (ATGIRSSHQEGGLAAVPWSCWPKED) are cytoplasmic. A helical membrane pass occupies residues 237 to 257 (LSLAEGFIAVSNIVFAYSFAM). Over 258–275 (CQFSFMDEMHTPSDYKKS) the chain is Extracellular. A helical transmembrane segment spans residues 276–296 (IVALGLIEIFIYTVTGGVVYA). Residues 297-316 (FVGPEVQSPALLSAGPLLAK) lie on the Cytoplasmic side of the membrane. The chain crosses the membrane as a helical span at residues 317 to 337 (VAFGIALPVIFISGSINTVVV). Topologically, residues 338–357 (SRYLIERIWPNNVIRYVNTP) are extracellular. A helical transmembrane segment spans residues 358 to 378 (AGWMVWLGFDFGITLIAWVIA). At 379–386 (EAIPFFSD) the chain is on the cytoplasmic side. A helical transmembrane segment spans residues 387–407 (LLAICSALFISGFSFYFPALM). Residues 408 to 427 (YFKITRNDAKSQGKKYFLDA) are Extracellular-facing. A helical membrane pass occupies residues 428–448 (LNMLCFVIGMGILGIGTYAAI). The Cytoplasmic segment spans residues 449 to 470 (QDIMDRYDHGKVSKPYSCAPLA).

The protein belongs to the amino acid/polyamine transporter 2 family.

It is found in the membrane. In terms of biological role, required for the transport of neutral aliphatic and aromatic amino acids via the N system. This Neurospora crassa (strain ATCC 24698 / 74-OR23-1A / CBS 708.71 / DSM 1257 / FGSC 987) protein is N amino acid transport system protein (mtr).